A 447-amino-acid polypeptide reads, in one-letter code: Probable butyrate:acetyl-CoA coenzyme A-transferase (447 aa).

220 to 224 (GIGGT) lines the CoA pocket. The active-site 5-glutamyl coenzyme A thioester intermediate is the E245. Residues I320 and G343 each contribute to the CoA site.

Belongs to the acetyl-CoA hydrolase/transferase family.

It is found in the cytoplasm. The catalysed reaction is butanoate + acetyl-CoA = butanoyl-CoA + acetate. Its pathway is lipid metabolism; butanoate metabolism. Coenzyme A-transferase that converts butyrate to butyryl-CoA. Involved in the syntrophic growth of S.wolfei on butyrate in cooperation with methanogens or an appropriate hydrogen-scavenging bacterium, as part of the butyrate oxidation pathway. The protein is Probable butyrate:acetyl-CoA coenzyme A-transferase of Syntrophomonas wolfei subsp. wolfei (strain DSM 2245B / Goettingen).